The sequence spans 274 residues: NADPH-dependent 7-cyano-7-deazaguanine reductase (274 aa).

80-82 serves as a coordination point for substrate; the sequence is VES. 82-83 is an NADPH binding site; the sequence is SK. The Thioimide intermediate role is filled by Cys-181. Asp-188 serves as the catalytic Proton donor. A substrate-binding site is contributed by 220–221; the sequence is HE. 249–250 is an NADPH binding site; it reads RG.

It belongs to the GTP cyclohydrolase I family. QueF type 2 subfamily. In terms of assembly, homodimer.

The protein resides in the cytoplasm. The enzyme catalyses 7-aminomethyl-7-carbaguanine + 2 NADP(+) = 7-cyano-7-deazaguanine + 2 NADPH + 3 H(+). The protein operates within tRNA modification; tRNA-queuosine biosynthesis. Its function is as follows. Catalyzes the NADPH-dependent reduction of 7-cyano-7-deazaguanine (preQ0) to 7-aminomethyl-7-deazaguanine (preQ1). This is NADPH-dependent 7-cyano-7-deazaguanine reductase from Burkholderia ambifaria (strain ATCC BAA-244 / DSM 16087 / CCUG 44356 / LMG 19182 / AMMD) (Burkholderia cepacia (strain AMMD)).